The following is a 355-amino-acid chain: Uroporphyrinogen decarboxylase (355 aa).

Residues 27–31 (RQAGR), Asp77, Tyr154, Thr209, and His327 each bind substrate.

The protein belongs to the uroporphyrinogen decarboxylase family. Homodimer.

It localises to the cytoplasm. It catalyses the reaction uroporphyrinogen III + 4 H(+) = coproporphyrinogen III + 4 CO2. It participates in porphyrin-containing compound metabolism; protoporphyrin-IX biosynthesis; coproporphyrinogen-III from 5-aminolevulinate: step 4/4. Catalyzes the decarboxylation of four acetate groups of uroporphyrinogen-III to yield coproporphyrinogen-III. This chain is Uroporphyrinogen decarboxylase, found in Tolumonas auensis (strain DSM 9187 / NBRC 110442 / TA 4).